Here is a 440-residue protein sequence, read N- to C-terminus: C4-dicarboxylate transport protein (440 aa).

Transmembrane regions (helical) follow at residues 15–35 (VLVA…TGVA), 46–66 (LIKM…IAGM), 78–98 (YALL…LVVV), 146–166 (AFAN…GFAL), 190–210 (IINM…AFTI), 224–244 (LMAC…GGIC), 291–311 (VVGL…SIYL), 332–352 (ITLL…TGSG), and 354–374 (IVLA…LALI). A disordered region spans residues 420 to 440 (GAPLVDTRPTDDLGVAEGPAR).

It belongs to the dicarboxylate/amino acid:cation symporter (DAACS) (TC 2.A.23) family.

It is found in the cell inner membrane. In terms of biological role, responsible for the transport of dicarboxylates such as succinate, fumarate, and malate from the periplasm across the membrane. The sequence is that of C4-dicarboxylate transport protein from Pseudomonas putida (strain ATCC 700007 / DSM 6899 / JCM 31910 / BCRC 17059 / LMG 24140 / F1).